The chain runs to 175 residues: Cytidylate kinase (175 aa).

ATP is bound at residue 7–15 (GQPGSGKTS).

It belongs to the cytidylate kinase family. Type 2 subfamily.

It localises to the cytoplasm. It carries out the reaction CMP + ATP = CDP + ADP. The enzyme catalyses dCMP + ATP = dCDP + ADP. This chain is Cytidylate kinase, found in Methanocella arvoryzae (strain DSM 22066 / NBRC 105507 / MRE50).